The following is an 82-amino-acid chain: Small ribosomal subunit protein bS16 (82 aa).

Belongs to the bacterial ribosomal protein bS16 family.

The polypeptide is Small ribosomal subunit protein bS16 (Pseudoalteromonas translucida (strain TAC 125)).